The following is a 331-amino-acid chain: ADP-L-glycero-D-manno-heptose-6-epimerase (331 aa).

Residues 11–12 (FI), 32–33 (DN), lysine 39, lysine 54, 75–79 (EGACS), and asparagine 92 each bind NADP(+). Tyrosine 139 functions as the Proton acceptor in the catalytic mechanism. Lysine 143 is an NADP(+) binding site. Asparagine 168 is a binding site for substrate. Residues valine 169 and lysine 177 each contribute to the NADP(+) site. Catalysis depends on lysine 177, which acts as the Proton acceptor. Residues arginine 179, histidine 186, 200–203 (FGEY), arginine 213, and tyrosine 292 contribute to the substrate site.

It belongs to the NAD(P)-dependent epimerase/dehydratase family. HldD subfamily. Homopentamer. NADP(+) serves as cofactor.

The enzyme catalyses ADP-D-glycero-beta-D-manno-heptose = ADP-L-glycero-beta-D-manno-heptose. Its pathway is nucleotide-sugar biosynthesis; ADP-L-glycero-beta-D-manno-heptose biosynthesis; ADP-L-glycero-beta-D-manno-heptose from D-glycero-beta-D-manno-heptose 7-phosphate: step 4/4. Its function is as follows. Catalyzes the interconversion between ADP-D-glycero-beta-D-manno-heptose and ADP-L-glycero-beta-D-manno-heptose via an epimerization at carbon 6 of the heptose. This Cupriavidus taiwanensis (strain DSM 17343 / BCRC 17206 / CCUG 44338 / CIP 107171 / LMG 19424 / R1) (Ralstonia taiwanensis (strain LMG 19424)) protein is ADP-L-glycero-D-manno-heptose-6-epimerase.